A 95-amino-acid chain; its full sequence is Orphan antitoxin ParD2 (95 aa).

Antitoxin component of a non-functional type II toxin-antitoxin (TA system). Does not neutralize the effect of any of the RelE or ParE toxins. This is Orphan antitoxin ParD2 (parD2) from Caulobacter vibrioides (strain ATCC 19089 / CIP 103742 / CB 15) (Caulobacter crescentus).